The following is a 345-amino-acid chain: MSRIVNVKLSLKRYEYEKPFHITGSVSSESRNVEVEIVLESGVKGYGEASPSFRVNGERVEALLAIENAVREMITGIDVRNYARIFEITDRLFGFPSLKAAVQFATLDALSQELGTQVCYLLGGKRDEIETDKTVGIDTVENRVKEAKKIFEEGFRVIKIKVGENLKEDIEAVEEIAKVTRGAKYIVDANMGYTQKEAVEFARAVYQKGIDIAVYEQPVRREDIEGLKFVRFHSPFPVAADESARTKFDVMRLVKEEAVDYVNIKLMKSGISDALAIVEIAESSGLKLMIGCMGESSLGINQSVHFALGTGAFEFHDLDSHLMLKEEVFRGKFIQDGPRMRVKDQ.

Substrate is bound by residues T134 and K159. K161 (proton acceptor; specific for (R)-substrate epimerization) is an active-site residue. Mg(2+) is bound at residue D188. N190 provides a ligand contact to substrate. The Mg(2+) site is built by E216 and D241. The active-site Proton acceptor; specific for (S)-substrate epimerization is the K265. Substrate contacts are provided by C292, D317, and D319.

The protein belongs to the mandelate racemase/muconate lactonizing enzyme family. Requires Mg(2+) as cofactor.

It catalyses the reaction L-alanyl-L-glutamate = L-alanyl-D-glutamate. It participates in cell wall degradation; peptidoglycan degradation. Functionally, catalyzes the epimerization of L-Ala-D-Glu to L-Ala-L-Glu and has probably a role in the metabolism of the murein peptide, of which L-Ala-D-Glu is a component. Is also able to catalyze the reverse reaction and the epimerization of a broad range of other dipeptides; is most efficient with L-Ala-D/L-Phe, L-Ala-D/L-Tyr, and L-Ala-D/L-His. The sequence is that of L-Ala-D/L-Glu epimerase from Thermotoga maritima (strain ATCC 43589 / DSM 3109 / JCM 10099 / NBRC 100826 / MSB8).